A 420-amino-acid polypeptide reads, in one-letter code: Putative kinase Y4mE (420 aa).

Aspartate 302 serves as the catalytic Proton acceptor.

Belongs to the HipA Ser/Thr kinase family.

This Sinorhizobium fredii (strain NBRC 101917 / NGR234) protein is Putative kinase Y4mE.